A 220-amino-acid polypeptide reads, in one-letter code: Tumor protein D54 (220 aa).

Methionine 1 bears the N-acetylmethionine mark. Phosphoserine occurs at positions 3, 12, and 19. Positions glycine 40–glycine 82 form a coiled coil. Phosphoserine is present on residues serine 96, serine 149, serine 168, and serine 175. Phosphothreonine is present on threonine 177. Serine 180 carries the post-translational modification Phosphoserine. Phosphothreonine is present on threonine 187. The interval lysine 189–phenylalanine 220 is disordered. Phosphoserine occurs at positions 206 and 209.

This sequence belongs to the TPD52 family. As to quaternary structure, forms a homodimer or heterodimer with other members of the family. Interacts with MAL2.

In Mus musculus (Mouse), this protein is Tumor protein D54 (Tpd52l2).